We begin with the raw amino-acid sequence, 419 residues long: O-methyltransferase gsfB (419 aa).

Residues 255-256 (GG), aspartate 278, 300-301 (DF), and arginine 316 each bind S-adenosyl-L-methionine. The Proton acceptor role is filled by histidine 320.

This sequence belongs to the class I-like SAM-binding methyltransferase superfamily. Cation-independent O-methyltransferase family.

It carries out the reaction 2-(2,4-dihydroxy-6-oxidobenzoyl)-5-hydroxy-3-methylbenzenolate + S-adenosyl-L-methionine = griseophenone D + S-adenosyl-L-homocysteine + H(+). Its pathway is secondary metabolite biosynthesis; terpenoid biosynthesis. In terms of biological role, O-methyltransferase; part of the gene cluster that mediates the biosynthesis of griseofulvin, an important antifungal drug that has been in use for a long time for treating dermatophyte infections. The first step of the pathway is the formation of the heptaketide backbone by gsfA which is initiated by priming with acetyl-CoA, followed by sequential condensations of 6 malonyl-CoA units. The resulting benzophenone can undergo a spontaneous dehydration to form norlichexanthone. However, the true precursor for the griseofulvin biosynthesis is not norlichexanthone, but the heptaketide benzophenone that is O-methylated at 3-OH by gsfB to produce griseophenone D which is further methylated at 9-OH by gsfC to yield griseophenone C. Griseophenone C is then substrate of halogenase gsfI which is responsible for the regio-specific chlorination at the C13 position to form griseophenone B. The cytochrome P450 gsfF catalyzes the coupling of orcinol and phloroglucinol rings in griseophenone B to form desmethyl-dehydrogriseofulvin A which is further methylated at 5-OH by gsfD to yield dehydrogriseofulvin. Finally, gsfE performs stereospecific reduction of enone 18 of dehydrogriseofulvin to afford the final product griseofulvin. In Penicillium aethiopicum, this protein is O-methyltransferase gsfB.